The chain runs to 87 residues: MANIKSAKKRAVQSEKRRKHNASSRSMMRTFIKKVYAAIATGDKEVAQKAFNDMQPIVDRQASKGLIHKNKAARHKSNLVARINAMQ.

The segment covering 1 to 22 (MANIKSAKKRAVQSEKRRKHNA) has biased composition (basic residues). The interval 1 to 27 (MANIKSAKKRAVQSEKRRKHNASSRSM) is disordered.

It belongs to the bacterial ribosomal protein bS20 family.

In terms of biological role, binds directly to 16S ribosomal RNA. In Pectobacterium atrosepticum (strain SCRI 1043 / ATCC BAA-672) (Erwinia carotovora subsp. atroseptica), this protein is Small ribosomal subunit protein bS20.